Reading from the N-terminus, the 707-residue chain is MVLKSTSANDVSVYQVSGTNVSRSLPDWIAKKRKRQLKNDLEYQNRVELIQDFEFSEASNKIKVSRDGQYCMATGTYKPQIHVYDFANLSLKFDRHTDAENVDFTILSDDWTKSVHLQNDRSIQFQNKGGLHYTTRIPKFGRSLVYNKVNCDLYVGASGNELYRLNLEKGRFLNPFKLDTEGVNHVSINEVNGLLAAGTETNVVEFWDPRSRSRVSKLYLENNIDNRPFQVTTTSFRNDGLTFACGTSNGYSYIYDLRTSEPSIIKDQGYGFDIKKIIWLDNVGTENKIVTCDKRIAKIWDRLDGKAYASMEPSVDINDIEHVPGTGMFFTANESIPMHTYYIPSLGPSPRWCSFLDSITEELEEKPSDTVYSNYRFITRDDVKKLNLTHLVGSRVLRAYMHGFFINTELYDKVSLIANPDAYKDEREREIRRRIEKERESRIRSSGAVQKPKIKVNKTLVDKLSQKRGDKVAGKVLTDDRFKEMFEDEEFQVDEDDYDFKQLNPVKSIKETEEGAAKRIRALTAAEESDEERIAMKDGRGHYDYEDEESDEEESDDETNQKSNKEELSEKDLRKMEKQKALIERRKKEKEQSERFMNEMKAGTSTSTQRDESAHVTFGEQVGELLEVENGKKSNESILRRNQRGEAELTFIPQRKSKKDGNYKSRRHDNSSDEEGIDENGNKKDNGRSKPRFENRRRASKNAFRGM.

5 WD repeats span residues 54–94, 178–217, 226–265, 269–310, and 312–351; these read EFSE…LKFD, LDTE…RVSK, NRPF…PSII, GYGF…AYAS, and EPSV…PSPR. The tract at residues 523–707 is disordered; sequence LTAAEESDEE…RASKNAFRGM (185 aa). Residue serine 529 is modified to Phosphoserine. Over residues 532 to 544 the composition is skewed to basic and acidic residues; that stretch reads ERIAMKDGRGHYD. The span at 545-558 shows a compositional bias: acidic residues; the sequence is YEDEESDEEESDDE. Serine 550 and serine 555 each carry phosphoserine. 4 stretches are compositionally biased toward basic and acidic residues: residues 559–598, 629–647, 659–671, and 680–697; these read TNQK…RFMN, ENGK…RGEA, KDGN…HDNS, and NGNK…ENRR.

Belongs to the WD repeat NOL10/ENP2 family. As to quaternary structure, component of the 90S pre-ribosomes.

The protein resides in the nucleus. It is found in the nucleolus. Its function is as follows. May be involved in rRNA-processing and ribosome biosynthesis. In Saccharomyces cerevisiae (strain ATCC 204508 / S288c) (Baker's yeast), this protein is Ribosome biogenesis protein ENP2 (ENP2).